Here is a 170-residue protein sequence, read N- to C-terminus: MNLTLLATEGFGLNFNLFETNILNWAVVVFGLYKFLPGFLGKMLQKRREGILLELKDAEDRLLNATQALEKAKKDLSSAAEKASQIKADSLKRSESIRMESEKKAIEEMARIKQSAISDESSEASRAISQLRKEAVELAIKKALDSLPNRLDKTTQENLVTQSINNIEVN.

A helical membrane pass occupies residues 22 to 41 (ILNWAVVVFGLYKFLPGFLG). The disordered stretch occupies residues 76-98 (LSSAAEKASQIKADSLKRSESIR). Over residues 89–98 (DSLKRSESIR) the composition is skewed to basic and acidic residues.

Belongs to the ATPase B chain family. F-type ATPases have 2 components, F(1) - the catalytic core - and F(0) - the membrane proton channel. F(1) has five subunits: alpha(3), beta(3), gamma(1), delta(1), epsilon(1). F(0) has four main subunits: a(1), b(1), b'(1) and c(10-14). The alpha and beta chains form an alternating ring which encloses part of the gamma chain. F(1) is attached to F(0) by a central stalk formed by the gamma and epsilon chains, while a peripheral stalk is formed by the delta, b and b' chains.

Its subcellular location is the cellular thylakoid membrane. Its function is as follows. F(1)F(0) ATP synthase produces ATP from ADP in the presence of a proton or sodium gradient. F-type ATPases consist of two structural domains, F(1) containing the extramembraneous catalytic core and F(0) containing the membrane proton channel, linked together by a central stalk and a peripheral stalk. During catalysis, ATP synthesis in the catalytic domain of F(1) is coupled via a rotary mechanism of the central stalk subunits to proton translocation. Component of the F(0) channel, it forms part of the peripheral stalk, linking F(1) to F(0). The chain is ATP synthase subunit b from Prochlorococcus marinus (strain AS9601).